The sequence spans 716 residues: Fatty acid oxidation complex subunit alpha (716 aa).

The segment at 1–189 (MIYQSPTIQV…KVGAIDAVVA (189 aa)) is enoyl-CoA hydratase/isomerase. A substrate-binding site is contributed by aspartate 296. The tract at residues 311 to 716 (KNIDTAAVLG…AANNGSYYQS (406 aa)) is 3-hydroxyacyl-CoA dehydrogenase. NAD(+) is bound by residues methionine 324, aspartate 343, 400–402 (VVE), lysine 407, and serine 429. The active-site For 3-hydroxyacyl-CoA dehydrogenase activity is histidine 450. Asparagine 453 lines the NAD(+) pocket. Substrate is bound at residue asparagine 500.

The protein in the N-terminal section; belongs to the enoyl-CoA hydratase/isomerase family. In the C-terminal section; belongs to the 3-hydroxyacyl-CoA dehydrogenase family. As to quaternary structure, heterotetramer of two alpha chains (FadB) and two beta chains (FadA).

The enzyme catalyses a (3S)-3-hydroxyacyl-CoA + NAD(+) = a 3-oxoacyl-CoA + NADH + H(+). It carries out the reaction a (3S)-3-hydroxyacyl-CoA = a (2E)-enoyl-CoA + H2O. It catalyses the reaction a 4-saturated-(3S)-3-hydroxyacyl-CoA = a (3E)-enoyl-CoA + H2O. The catalysed reaction is (3S)-3-hydroxybutanoyl-CoA = (3R)-3-hydroxybutanoyl-CoA. The enzyme catalyses a (3Z)-enoyl-CoA = a 4-saturated (2E)-enoyl-CoA. It carries out the reaction a (3E)-enoyl-CoA = a 4-saturated (2E)-enoyl-CoA. It functions in the pathway lipid metabolism; fatty acid beta-oxidation. Its function is as follows. Involved in the aerobic and anaerobic degradation of long-chain fatty acids via beta-oxidation cycle. Catalyzes the formation of 3-oxoacyl-CoA from enoyl-CoA via L-3-hydroxyacyl-CoA. It can also use D-3-hydroxyacyl-CoA and cis-3-enoyl-CoA as substrate. This chain is Fatty acid oxidation complex subunit alpha, found in Shewanella sediminis (strain HAW-EB3).